Consider the following 432-residue polypeptide: Cytochrome c biogenesis protein CcsB (432 aa).

The next 3 membrane-spanning stretches (helical) occupy residues 14–34, 72–92, and 162–182; these read LRIA…GTAI, SSWF…CSWR, and VGPM…VWGS.

It belongs to the Ccs1/CcsB family. In terms of assembly, may interact with CcsA.

It localises to the cellular thylakoid membrane. Functionally, required during biogenesis of c-type cytochromes (cytochrome c6 and cytochrome f) at the step of heme attachment. This Prochlorococcus marinus (strain MIT 9303) protein is Cytochrome c biogenesis protein CcsB.